The following is a 123-amino-acid chain: Small ribosomal subunit protein uS12cz/uS12cy (123 aa).

It belongs to the universal ribosomal protein uS12 family. In terms of assembly, part of the 30S ribosomal subunit.

Its subcellular location is the plastid. The protein localises to the chloroplast. With S4 and S5 plays an important role in translational accuracy. Located at the interface of the 30S and 50S subunits. The chain is Small ribosomal subunit protein uS12cz/uS12cy (rps12-A) from Gossypium hirsutum (Upland cotton).